Here is a 293-residue protein sequence, read N- to C-terminus: Pantothenate synthetase (293 aa).

30 to 37 is a binding site for ATP; sequence MGNLHEGH. Catalysis depends on histidine 37, which acts as the Proton donor. Position 61 (glutamine 61) interacts with (R)-pantoate. Glutamine 61 contacts beta-alanine. 149–152 contributes to the ATP binding site; that stretch reads GEKD. Glutamine 155 serves as a coordination point for (R)-pantoate. Residues valine 178 and 186-189 each bind ATP; that span reads MSSR.

It belongs to the pantothenate synthetase family. As to quaternary structure, homodimer.

Its subcellular location is the cytoplasm. It carries out the reaction (R)-pantoate + beta-alanine + ATP = (R)-pantothenate + AMP + diphosphate + H(+). Its pathway is cofactor biosynthesis; (R)-pantothenate biosynthesis; (R)-pantothenate from (R)-pantoate and beta-alanine: step 1/1. In terms of biological role, catalyzes the condensation of pantoate with beta-alanine in an ATP-dependent reaction via a pantoyl-adenylate intermediate. The protein is Pantothenate synthetase of Vibrio cholerae serotype O1 (strain ATCC 39541 / Classical Ogawa 395 / O395).